The following is a 1219-amino-acid chain: Polyamine-transporting ATPase 13A3 (1219 aa).

Residues 1-28 (MDKEERKTINKGQEDEMEIHGYNLCRWK) lie on the Cytoplasmic side of the membrane. Residues 29–49 (LAMVFVGVICTGGFLLLLLYW) lie within the membrane without spanning it. Residues 50–201 (LPEWRVKATC…IAVKVPSVFK (152 aa)) are Cytoplasmic-facing. The chain crosses the membrane as a helical span at residues 202-222 (LLIKEVLNPFYIFQLFSVILW). Topologically, residues 223–228 (SVDEYY) are lumenal. Residues 229–249 (YYALAIVIMSVVSIISSLYSI) form a helical membrane-spanning segment. The Cytoplasmic portion of the chain corresponds to 250 to 405 (RKQYVMLHDM…KPTDFKLYRD (156 aa)). The helical transmembrane segment at 406 to 426 (AYLFLLCLVVVAGIGFIYTII) threads the bilayer. The Lumenal segment spans residues 427 to 444 (NSILNEKEVQEIIIKSLD). Residues 445-465 (IITITVPPALPAAMTAGIVYA) form a helical membrane-spanning segment. At 466–936 (QRRLKKVGIF…ALMTSFCVFK (471 aa)) the chain is on the cytoplasmic side. Aspartate 494 acts as the 4-aspartylphosphate intermediate in catalysis. Positions 494 and 496 each coordinate Mg(2+). Residues 494 to 496 (DKT), phenylalanine 624, arginine 680, and aspartate 746 each bind ATP. Serine 813 bears the Phosphoserine mark. Positions 879 and 883 each coordinate Mg(2+). ATP is bound at residue 879–883 (DGAND). A helical transmembrane segment spans residues 937-957 (FMALYSIIQYFSVTLLYSILS). Position 958 (asparagine 958) is a topological domain, lumenal. Residues 959–979 (LGDFQFLFIDLAIILVVVFTM) traverse the membrane as a helical segment. The Cytoplasmic portion of the chain corresponds to 980–995 (SLNPAWKELVAQRPPS). Residues 996 to 1016 (GLISGALLFSVLSQIVISVGF) traverse the membrane as a helical segment. Over 1017–1066 (QSLGFFWVKQYKVCDPNSDVCNTTRSACWNSSHLYNGTELDSCKIQNYEN) the chain is Lumenal. Residues 1067-1087 (TTVFFISSFQYLTVAVAFSKG) form a helical membrane-spanning segment. The Cytoplasmic segment spans residues 1088–1098 (KPFRQPCYKNY). A helical membrane pass occupies residues 1099–1119 (FFVISVIILYVFILFIMLHPV). The Lumenal segment spans residues 1120–1136 (ASVDQVLEIMCVPYQWR). A helical transmembrane segment spans residues 1137-1157 (IYMLIIVLINAFVSITVEESV). Residues 1158-1219 (DRWGKCCLSW…NGSCQIITIA (62 aa)) lie on the Cytoplasmic side of the membrane.

The protein belongs to the cation transport ATPase (P-type) (TC 3.A.3) family. Type V subfamily. Expression is greatest in liver, followed by kidney, colon, stomach, brain and small intestine. Isoform 1 is highly expressed in the kidney while isoform 2 is highly expressed in the brain.

It localises to the recycling endosome membrane. The protein resides in the early endosome membrane. The protein localises to the late endosome membrane. The catalysed reaction is putrescine(out) + ATP + H2O = putrescine(in) + ADP + phosphate + H(+). Its function is as follows. ATP-driven pump involved in endocytosis-dependent polyamine transport. Uses ATP as an energy source to transfer polyamine precursor putrescine from the endosomal compartment to the cytosol. The sequence is that of Polyamine-transporting ATPase 13A3 from Mus musculus (Mouse).